Reading from the N-terminus, the 1146-residue chain is Cell division cycle and apoptosis regulator protein 1 (1146 aa).

An interaction with AR region spans residues 1–246; it reads MAQFGGQKNP…AQPQPQSLLQ (246 aa). The tract at residues 200–657 is interaction with GATA2; sequence QRIQTLPNQN…RALSSKGLKS (458 aa). The tract at residues 282–351 is disordered; the sequence is IVSQPQPARR…RRERERSPRR (70 aa). 2 stretches are compositionally biased toward basic and acidic residues: residues 290 to 331 and 338 to 349; these read RRLD…ERSP and ERSPRRERERSP. Residue S453 is modified to Phosphoserine. A coiled-coil region spans residues 591-615; that stretch reads KQQLVEKLQGERKKADGEQDEEEKD. Residues 599–635 are disordered; the sequence is QGERKKADGEQDEEEKDDGEVKEIATPTHWSKLDPKA. Acidic residues predominate over residues 608 to 618; sequence EQDEEEKDDGE. Position 624 is a phosphothreonine (T624). Residues 633–667 enclose the SAP domain; sequence PKAMKVNDLRKELESRALSSKGLKSQLIARLTKQL. K634 is covalently cross-linked (Glycyl lysine isopeptide (Lys-Gly) (interchain with G-Cter in ubiquitin)). An interaction with GATA1 region spans residues 640-1146; that stretch reads DLRKELESRA…EKSKENGSGV (507 aa). T664 is modified (phosphothreonine). Composition is skewed to basic and acidic residues over residues 671-684, 691-716, 793-814, and 829-852; these read EQKEEQKELEKSEK, DKKSEDDKEEEERKRQEEVERQRQER, KEDKKDKEKKSKKEERKDKKEE, and SGDDKDKKEDRDERKKEEKRKDDS. 2 disordered regions span residues 671-716 and 793-912; these read EQKE…RQER and KEDK…KEKP. Residues S682 and S694 each carry the phosphoserine modification. Residues 853-884 are compositionally biased toward acidic residues; that stretch reads KDDDETEEDNNQDEYDPMEAEEAEDEDDDREE. T858 carries the post-translational modification Phosphothreonine. Positions 885–912 are enriched in basic and acidic residues; the sequence is EEVKRDDKRDVSRYCKDRPAKDKEKEKP. Residue K1008 forms a Glycyl lysine isopeptide (Lys-Gly) (interchain with G-Cter in SUMO1); alternate linkage. A Glycyl lysine isopeptide (Lys-Gly) (interchain with G-Cter in SUMO2); alternate cross-link involves residue K1008. A coiled-coil region spans residues 1029-1110; the sequence is DVGSLLQKLE…LQFENQLNKT (82 aa). Residues K1063 and K1131 each participate in a glycyl lysine isopeptide (Lys-Gly) (interchain with G-Cter in SUMO2) cross-link.

In terms of assembly, directly interacts with ESR1, NR3C1 and p53/TP53. Interacts (via N-terminus) with CALCOCO1. Interacts with MED1 and GATA1. Interacts with AR and GATA2.

It localises to the cytoplasm. The protein resides in the perinuclear region. Associates with components of the Mediator and p160 coactivator complexes that play a role as intermediaries transducing regulatory signals from upstream transcriptional activator proteins to basal transcription machinery at the core promoter. Recruited to endogenous nuclear receptor target genes in response to the appropriate hormone. Also functions as a p53 coactivator. May thus play an important role in transcriptional regulation. May be involved in apoptosis signaling in the presence of the retinoid CD437. Apoptosis induction involves sequestration of 14-3-3 protein(s) and mediated altered expression of multiple cell cycle regulatory genes including MYC, CCNB1 and CDKN1A. Plays a role in cell cycle progression and/or cell proliferation. In association with CALCOCO1 enhances GATA1- and MED1-mediated transcriptional activation from the gamma-globin promoter during erythroid differentiation of K562 erythroleukemia cells. Can act as a both a coactivator and corepressor of AR-mediated transcription. Contributes to chromatin looping and AR transcription complex assembly by stabilizing AR-GATA2 association on chromatin and facilitating MED1 and RNA polymerase II recruitment to AR-binding sites. May play an important role in the growth and tumorigenesis of prostate cancer cells. This is Cell division cycle and apoptosis regulator protein 1 (Ccar1) from Mus musculus (Mouse).